The primary structure comprises 55 residues: Large ribosomal subunit protein bL33A (55 aa).

It belongs to the bacterial ribosomal protein bL33 family.

The sequence is that of Large ribosomal subunit protein bL33A from Salinispora tropica (strain ATCC BAA-916 / DSM 44818 / JCM 13857 / NBRC 105044 / CNB-440).